The primary structure comprises 274 residues: Large ribosomal subunit protein uL2 (274 aa).

Residues Val223 to Lys274 form a disordered region.

It belongs to the universal ribosomal protein uL2 family. In terms of assembly, part of the 50S ribosomal subunit. Forms a bridge to the 30S subunit in the 70S ribosome.

Its function is as follows. One of the primary rRNA binding proteins. Required for association of the 30S and 50S subunits to form the 70S ribosome, for tRNA binding and peptide bond formation. It has been suggested to have peptidyltransferase activity; this is somewhat controversial. Makes several contacts with the 16S rRNA in the 70S ribosome. The protein is Large ribosomal subunit protein uL2 of Colwellia psychrerythraea (strain 34H / ATCC BAA-681) (Vibrio psychroerythus).